The primary structure comprises 218 residues: Small ribosomal subunit protein uS3c (218 aa).

The KH type-2 domain maps to 47 to 118 (IQKTIKISSG…KLNIAITRIA (72 aa)).

The protein belongs to the universal ribosomal protein uS3 family. In terms of assembly, part of the 30S ribosomal subunit.

The protein localises to the plastid. It localises to the chloroplast. In Lotus japonicus (Lotus corniculatus var. japonicus), this protein is Small ribosomal subunit protein uS3c (rps3).